The primary structure comprises 90 residues: Acylphosphatase (90 aa).

The 86-residue stretch at 5–90 (SFVVHVWGQV…PPQKGGFHTN (86 aa)) folds into the Acylphosphatase-like domain. Residues arginine 20 and asparagine 38 contribute to the active site.

It belongs to the acylphosphatase family.

It catalyses the reaction an acyl phosphate + H2O = a carboxylate + phosphate + H(+). The protein is Acylphosphatase (acyP) of Aeromonas salmonicida (strain A449).